We begin with the raw amino-acid sequence, 263 residues long: Expansin-like A3 (263 aa).

Residues 1–20 (MRSFLYLIVVIFLFSSSVNA) form the signal peptide. An Expansin-like EG45 domain is found at 41–147 (SGACAYGPMA…QRVPCNYGKR (107 aa)). 2 N-linked (GlcNAc...) asparagine glycosylation sites follow: Asn-99 and Asn-102. In terms of domain architecture, Expansin-like CBD spans 161–243 (NYLAIKLLYQ…NWNSGRIYDA (83 aa)).

This sequence belongs to the expansin family. Expansin-like A subfamily.

Its subcellular location is the secreted. This Arabidopsis thaliana (Mouse-ear cress) protein is Expansin-like A3 (EXLA3).